A 124-amino-acid chain; its full sequence is UPF0344 protein OB1184 (124 aa).

4 helical membrane-spanning segments follow: residues 3-23, 33-53, 62-82, and 104-124; these read HMHI…LVMY, IIHM…GILT, MPIL…VAMM, and IALV…FLFI.

The protein belongs to the UPF0344 family.

The protein localises to the cell membrane. The chain is UPF0344 protein OB1184 from Oceanobacillus iheyensis (strain DSM 14371 / CIP 107618 / JCM 11309 / KCTC 3954 / HTE831).